We begin with the raw amino-acid sequence, 304 residues long: tRNA pseudouridine synthase B (304 aa).

The Nucleophile role is filled by Asp47. Positions 85-105 are disordered; sequence TNTDDGEGEVTETSDARPSDD.

The protein belongs to the pseudouridine synthase TruB family. Type 1 subfamily.

The catalysed reaction is uridine(55) in tRNA = pseudouridine(55) in tRNA. Responsible for synthesis of pseudouridine from uracil-55 in the psi GC loop of transfer RNAs. The polypeptide is tRNA pseudouridine synthase B (Dinoroseobacter shibae (strain DSM 16493 / NCIMB 14021 / DFL 12)).